The sequence spans 398 residues: Homeobox protein knotted-1-like 1 (398 aa).

Disordered regions lie at residues 20 to 61 (SPIS…HHHQ), 78 to 102 (NCFRSDHDQPNNNNNPSVKSEASSS), and 241 to 273 (LNNPDGKSDNMGSSDEEQENNSGGETELPEIDP). Low complexity predominate over residues 23 to 56 (SSSNKNDNTSDTNNNNNNNNSSNYGPGYNNTNNN). Residues 87–102 (PNNNNNPSVKSEASSS) show a composition bias toward polar residues. Positions 279–299 (ELKNHLLKKYSGYLSSLKQEL) constitute an ELK domain. Residues 300-363 (SKKKKKGKLP…NQRKRHWKPS (64 aa)) constitute a DNA-binding region (homeobox; TALE-type).

The protein belongs to the TALE/KNOX homeobox family. May form heterodimeric complex with the TALE/BELL proteins BEL1, BLH2, BLH8/PNF and BLH9/PNY. Interacts with OFP1, OFP2, OFP4, OFP6 and OFP12. Interacts with CCT7 and CCT8. Interacts with KNATM-B. Binds to AGO10/PNH. Interacts with BZIP30. Expressed in the vegetative meristem. Present in the base of flower primordia.

It is found in the nucleus. May play a role in meristem function, and may be involved in maintaining cells in an undifferentiated, meristematic state, and its expression disappears at the same time the shoot apex undergoes the transition from vegetative to reproductive development. Positive regulator of LATERAL ORGAN BOUNDARIES (LOB). Probably binds to the DNA sequence 5'-TGAC-3'. Able to traffic from the L1 to the L2/L3 layers of the meristem, presumably through plasmodesmata. This Arabidopsis thaliana (Mouse-ear cress) protein is Homeobox protein knotted-1-like 1 (KNAT1).